The following is a 216-amino-acid chain: 7-carboxy-7-deazaguanine synthase (216 aa).

Residues 12 to 14 (LQG) and Arg27 contribute to the substrate site. Residues 18–216 (RAGRAAVFCR…LQTHKYLGIP (199 aa)) enclose the Radical SAM core domain. [4Fe-4S] cluster is bound by residues Cys31, Cys46, and Cys49. Thr51 provides a ligand contact to Mg(2+). A substrate-binding site is contributed by Thr93. Residues Gly95, 136-138 (SPK), and 176-179 (QPRD) each bind S-adenosyl-L-methionine. Pro216 provides a ligand contact to substrate.

The protein belongs to the radical SAM superfamily. 7-carboxy-7-deazaguanine synthase family. As to quaternary structure, homodimer. [4Fe-4S] cluster is required as a cofactor. The cofactor is S-adenosyl-L-methionine. Requires Mg(2+) as cofactor.

The enzyme catalyses 6-carboxy-5,6,7,8-tetrahydropterin + H(+) = 7-carboxy-7-deazaguanine + NH4(+). It participates in purine metabolism; 7-cyano-7-deazaguanine biosynthesis. Its function is as follows. Catalyzes the complex heterocyclic radical-mediated conversion of 6-carboxy-5,6,7,8-tetrahydropterin (CPH4) to 7-carboxy-7-deazaguanine (CDG), a step common to the biosynthetic pathways of all 7-deazapurine-containing compounds. The protein is 7-carboxy-7-deazaguanine synthase of Nitratidesulfovibrio vulgaris (strain ATCC 29579 / DSM 644 / CCUG 34227 / NCIMB 8303 / VKM B-1760 / Hildenborough) (Desulfovibrio vulgaris).